Here is a 903-residue protein sequence, read N- to C-terminus: Glutamate receptor ionotropic, NMDA 1 (903 aa).

The N-terminal stretch at 1-20 (MGTMRLFLLAVLFLFSFARA) is a signal peptide. At 21-557 (GCDPKIVNIG…TLDSFMQPFQ (537 aa)) the chain is on the extracellular side. N-linked (GlcNAc...) asparagine glycosylation is found at Asn61, Asn203, Asn276, Asn300, Asn350, Asn368, Asn440, Asn469, and Asn489. An intrachain disulfide couples Cys79 to Cys308. Cystine bridges form between Cys420–Cys452 and Cys436–Cys453. The glycine site is built by Pro514, Thr516, and Arg521. A helical transmembrane segment spans residues 558-578 (STLWLLVGLSVHVVAVMLYLL). Residues 579–600 (DRFSPFGRFKVNSEEEEEDALT) are Cytoplasmic-facing. Residues 601–620 (LSSAMWFSWGVLLNSGIGEG) form a pore-forming region. The segment at residues 601-622 (LSSAMWFSWGVLLNSGIGEGAP) is an intramembrane region (discontinuously helical). The Cytoplasmic segment spans residues 623–628 (RSFSAR). The helical transmembrane segment at 629–645 (ILGMVWAGFAMIIVASY) threads the bilayer. At 646 to 810 (TANLAAFLVL…NAPATLTFEN (165 aa)) the chain is on the extracellular side. Residues Ser686 and Asp730 each coordinate glycine. Residues Cys742 and Cys796 are joined by a disulfide bond. A glycan (N-linked (GlcNAc...) asparagine) is linked at Asn769. Residues 811-831 (MAGVFMLVAGGIVAGIFLIFI) traverse the membrane as a helical segment. Topologically, residues 832–903 (EIAYKRHKDA…SSKDTVNVVV (72 aa)) are cytoplasmic.

It belongs to the glutamate-gated ion channel (TC 1.A.10.1) family. NR1/GRIN1 subfamily. As to quaternary structure, heterotetramer; the NMDAR subunits are modular and harbor tiered domains that function in concert to regulate opening and closing of the cation-selective ion channel pore. Forms heterotetrameric channels composed of two GluN1/zeta subunits (GRIN1), and two identical GluN2/epsilon subunits (GRIN2A, GRIN2B, GRIN2C or GRIN2D) or GluN3 subunits (GRIN3A or GRIN3B) (in vitro). Does not form functional channels by itself. Can also form heterotetrameric channels that contain at least two GluN1 subunits and at least two different GluN2 subunits (or a combination of one GluN2 and one GluN3 subunits) (in vitro). In vivo, the subunit composition may vary in function of the expression levels of the different subunits.

The protein resides in the cell membrane. It is found in the postsynaptic cell membrane. The protein localises to the postsynaptic density membrane. It localises to the synaptic cell membrane. It catalyses the reaction Ca(2+)(in) = Ca(2+)(out). It carries out the reaction Na(+)(in) = Na(+)(out). The catalysed reaction is K(+)(in) = K(+)(out). Its activity is regulated as follows. NMDA glutamate receptor activity is modulated by zinc ions. The NMDA glutamate receptor activity of the heterotetramer with grin2b is stimulated by micromolar levels of Zn(2+). The NMDA glutamate receptor activity of the heterotetramer with grin2a is inhibited by nanomolar levels of Zn(2+). Its function is as follows. Component of N-methyl-D-aspartate (NMDA) receptors (NMDARs) that function as heterotetrameric, ligand-gated cation channels with high calcium permeability and voltage-dependent block by Mg(2+). NMDARs participate in synaptic plasticity. Channel activation requires binding of the neurotransmitter L-glutamate to the GluN2 subunit, glycine binding to the GluN1 subunit, plus membrane depolarization to eliminate channel inhibition by Mg(2+). NMDARs mediate simultaneously the potasium efflux and the influx of calcium and sodium. Each GluN2 or GluN3 subunit confers differential attributes to channel properties, including activation, deactivation and desensitization kinetics, pH sensitivity, Ca2(+) permeability, and binding to allosteric modulators. In Xenopus laevis (African clawed frog), this protein is Glutamate receptor ionotropic, NMDA 1.